A 193-amino-acid chain; its full sequence is Adenine phosphoribosyltransferase (193 aa).

It belongs to the purine/pyrimidine phosphoribosyltransferase family. In terms of assembly, homodimer.

It is found in the cytoplasm. The enzyme catalyses AMP + diphosphate = 5-phospho-alpha-D-ribose 1-diphosphate + adenine. The protein operates within purine metabolism; AMP biosynthesis via salvage pathway; AMP from adenine: step 1/1. Catalyzes a salvage reaction resulting in the formation of AMP, that is energically less costly than de novo synthesis. The protein is Adenine phosphoribosyltransferase of Bifidobacterium longum (strain NCC 2705).